Here is a 394-residue protein sequence, read N- to C-terminus: MAREKFDRSKPHVNVGTIGHIDHGKTTLTAAICTVLAKEGKSAATRYDEIDKAPEEKARGITINSAHVEYSSDKRHYAHVDCPGHADYIKNMITGAAQMDGAILVVSATDSVMPQTREHILLARQVGVPKMVVFLNKCDIASDEEVQELVAEEVRDLLTSYGFDGKNTPIIYGSALKALEGDPKWEAKIHDLIKAVDEWIPTPTREVDKPFLLAIEDTMTITGRGTVVTGRVERGELKVGQEVEIVGLKPIRKAVVTGIEMFKKELDSAMAGDNAGVLLRGVERKEVERGQVLAKPGSIKPHKKFKAEIYALKKEEGGRHTGFLNGYRPQFYFRTTDVTGSIALAENTEMVLPGDNASITVELIAPIACEKGSKFSIREGGRTVGAGTVTEVLE.

Residues 10–204 form the tr-type G domain; it reads KPHVNVGTIG…AVDEWIPTPT (195 aa). Positions 19–26 are G1; it reads GHIDHGKT. 19–26 provides a ligand contact to GTP; the sequence is GHIDHGKT. Thr-26 contacts Mg(2+). The segment at 60–64 is G2; it reads GITIN. The segment at 81–84 is G3; sequence DCPG. Residues 81–85 and 136–139 contribute to the GTP site; these read DCPGH and NKCD. The segment at 136–139 is G4; the sequence is NKCD. A G5 region spans residues 174-176; the sequence is SAL.

Belongs to the TRAFAC class translation factor GTPase superfamily. Classic translation factor GTPase family. EF-Tu/EF-1A subfamily. Monomer.

It localises to the cytoplasm. The catalysed reaction is GTP + H2O = GDP + phosphate + H(+). Functionally, GTP hydrolase that promotes the GTP-dependent binding of aminoacyl-tRNA to the A-site of ribosomes during protein biosynthesis. This chain is Elongation factor Tu, found in Mycoplasma genitalium (strain ATCC 33530 / DSM 19775 / NCTC 10195 / G37) (Mycoplasmoides genitalium).